The primary structure comprises 153 residues: MGLTSQLLPPLFFLLACAGNFVHGHKCDITLQEIIKTLNSLTEQKTLCTKLTITDILAASKNTTEKETFCRAATVLRQFYSHHEKDTRCLGATAQQFHRHKQLIRFLKRLDRNLWGLAGLNSCPVKEANQSTLENFLERLKTIMREKYSKCSS.

A signal peptide spans 1–24 (MGLTSQLLPPLFFLLACAGNFVHG). 3 disulfide bridges follow: Cys-27–Cys-151, Cys-48–Cys-89, and Cys-70–Cys-123. N-linked (GlcNAc...) asparagine glycosylation is present at Asn-62.

This sequence belongs to the IL-4/IL-13 family.

It is found in the secreted. Its function is as follows. Participates in at least several B-cell activation processes as well as of other cell types. It is a costimulator of DNA-synthesis. It induces the expression of class II MHC molecules on resting B-cells. It enhances both secretion and cell surface expression of IgE and IgG1. It also regulates the expression of the low affinity Fc receptor for IgE (CD23) on both lymphocytes and monocytes. Positively regulates IL31RA expression in macrophages. Stimulates autophagy in dendritic cells by interfering with mTORC1 signaling and through the induction of RUFY4. The polypeptide is Interleukin-4 (IL4) (Macaca fascicularis (Crab-eating macaque)).